The primary structure comprises 1192 residues: DNA topoisomerase 2 (1192 aa).

ATP-binding positions include asparagine 64, asparagine 95, and 142-149; that span reads GTNGVGLK. Positions 438, 539, and 541 each coordinate Mg(2+). The region spanning 707-1174 is the Topo IIA-type catalytic domain; sequence IPNFLDGMTR…PGASVWLEEI (468 aa). Residue tyrosine 800 is the O-(5'-phospho-DNA)-tyrosine intermediate of the active site.

It belongs to the type II topoisomerase family. It depends on Mg(2+) as a cofactor. Requires Mn(2+) as cofactor. The cofactor is Ca(2+).

It is found in the host cytoplasm. It catalyses the reaction ATP-dependent breakage, passage and rejoining of double-stranded DNA.. Functionally, type II topoisomerase. Processively relaxes supercoiled DNA. Displays DNA-supercoiling activity only when associated with the viral histone-like protein. In African swine fever virus (isolate Pig/Kenya/KEN-50/1950) (ASFV), this protein is DNA topoisomerase 2.